Consider the following 1241-residue polypeptide: Dinoflagellate luciferase (1241 aa).

Luciferase regions lie at residues lysine 114 to aspartate 465, aspartate 491 to aspartate 842, and glutamate 868 to aspartate 1218.

It belongs to the calycin superfamily. Luciferase family.

The protein localises to the cytoplasmic vesicle. It carries out the reaction dinoflagellate luciferin + O2 = oxidized dinoflagellate luciferin + hnu + H2O + H(+). Its activity is regulated as follows. Regulated by pH: upon acidification, at a pH of 6.3, dinoflagellate luciferin is released from luciferin-binding protein LBP, allowing the interaction between Dinoflagellate luciferase and its substrate luciferin. Emits blue light flashes with a wavelength of 475 nm during the night phase. The polypeptide is Dinoflagellate luciferase (Lingulodinium polyedra (Dinoflagellate)).